The chain runs to 111 residues: DNA-directed RNA polymerase subunit Rpo11 (111 aa).

Belongs to the archaeal Rpo11/eukaryotic RPB11/RPC19 RNA polymerase subunit family. In terms of assembly, part of the RNA polymerase complex.

The protein localises to the cytoplasm. The catalysed reaction is RNA(n) + a ribonucleoside 5'-triphosphate = RNA(n+1) + diphosphate. Functionally, DNA-dependent RNA polymerase (RNAP) catalyzes the transcription of DNA into RNA using the four ribonucleoside triphosphates as substrates. The sequence is that of DNA-directed RNA polymerase subunit Rpo11 from Thermoplasma acidophilum (strain ATCC 25905 / DSM 1728 / JCM 9062 / NBRC 15155 / AMRC-C165).